The following is a 1553-amino-acid chain: DNA topoisomerase 2-alpha (1553 aa).

The tract at residues 1-25 is disordered; it reads MELLDSPAPLRPLHDNPRLPKADGA. Positions 12-25 are enriched in basic and acidic residues; it reads PLHDNPRLPKADGA. ATP-binding positions include N92, N121, 149–151, and 162–169; these read SSN and GRNGYGAK. Positions 343 to 345 are interaction with DNA; sequence KKK. An ATP-binding site is contributed by 377 to 379; that stretch reads QTK. A Toprim domain is found at 456 to 573; that stretch reads CTLILTEGDS…SLLRHNFLEE (118 aa). Residues E462, D542, and D544 each coordinate Mg(2+). The Topo IIA-type catalytic domain occupies 716 to 1163; sequence IPSLVDGLKP…SPSDLWKEDL (448 aa). Y806 functions as the O-(5'-phospho-DNA)-tyrosine intermediate in the catalytic mechanism. The tract at residues 991–1000 is interaction with DNA; that stretch reads KLQTNLTCNS. Disordered regions lie at residues 1095-1114 and 1186-1553; these read QNKE…AATG and TGKP…DDMF. The segment covering 1098-1107 has biased composition (acidic residues); sequence EEEEGDESGE. Basic and acidic residues predominate over residues 1242–1262; that stretch reads SEKNESDEKQEGNSSGDKEPS. Composition is skewed to acidic residues over residues 1300–1310 and 1334–1349; these read SESDSESDDFE and SDAD…EYQE. Positions 1371–1385 are enriched in basic and acidic residues; that stretch reads VPKEKKGKAPKEKPL. Positions 1413–1432 are enriched in low complexity; sequence PRAQAVPKKPAAAKKGSTAK. A compositionally biased stretch (basic residues) spans 1444 to 1454; the sequence is KKKAAPKAPRR. Residues 1517–1532 are compositionally biased toward low complexity; that stretch reads SIDLTADSPAAAAPRT.

The protein belongs to the type II topoisomerase family. In terms of assembly, homodimer. Mg(2+) is required as a cofactor. It depends on Mn(2+) as a cofactor. Requires Ca(2+) as cofactor.

The protein localises to the cytoplasm. The protein resides in the nucleus. Its subcellular location is the nucleoplasm. It is found in the nucleolus. The catalysed reaction is ATP-dependent breakage, passage and rejoining of double-stranded DNA.. In terms of biological role, key decatenating enzyme that alters DNA topology by binding to two double-stranded DNA molecules, generating a double-stranded break in one of the strands, passing the intact strand through the broken strand, and religating the broken strand. May play a role in the regulation of circadian rhythm. This chain is DNA topoisomerase 2-alpha (TOP2A), found in Gallus gallus (Chicken).